We begin with the raw amino-acid sequence, 146 residues long: 3-dehydroquinate dehydratase (146 aa).

The active-site Proton acceptor is the Tyr-23. Substrate-binding residues include Asn-74, His-80, and Asp-87. The active-site Proton donor is the His-100. Substrate is bound by residues 101 to 102 and Arg-111; that span reads IS.

It belongs to the type-II 3-dehydroquinase family. Homododecamer.

It catalyses the reaction 3-dehydroquinate = 3-dehydroshikimate + H2O. The protein operates within metabolic intermediate biosynthesis; chorismate biosynthesis; chorismate from D-erythrose 4-phosphate and phosphoenolpyruvate: step 3/7. Functionally, catalyzes a trans-dehydration via an enolate intermediate. The protein is 3-dehydroquinate dehydratase of Bacillus cereus (strain G9842).